We begin with the raw amino-acid sequence, 109 residues long: Nucleoid-associated protein AHA_2212 (109 aa).

Disordered regions lie at residues 1–23 (MFGKGGMGNLMKQAQQMQERMQK) and 88–109 (NKSKMGELTGGMQLPPGFKMPF). Positions 11–23 (MKQAQQMQERMQK) are enriched in low complexity.

The protein belongs to the YbaB/EbfC family. Homodimer.

It localises to the cytoplasm. It is found in the nucleoid. Functionally, binds to DNA and alters its conformation. May be involved in regulation of gene expression, nucleoid organization and DNA protection. In Aeromonas hydrophila subsp. hydrophila (strain ATCC 7966 / DSM 30187 / BCRC 13018 / CCUG 14551 / JCM 1027 / KCTC 2358 / NCIMB 9240 / NCTC 8049), this protein is Nucleoid-associated protein AHA_2212.